The primary structure comprises 169 residues: Inorganic pyrophosphatase (169 aa).

The residue at position 1 (Met1) is an N-formylmethionine. Substrate is bound by residues Lys28, Arg42, and Tyr54. Positions 64, 69, and 101 each coordinate Mg(2+). Tyr138 is a substrate binding site.

The protein belongs to the PPase family. As to quaternary structure, homohexamer. It depends on Mg(2+) as a cofactor.

The protein localises to the cytoplasm. It carries out the reaction diphosphate + H2O = 2 phosphate + H(+). Functionally, catalyzes the hydrolysis of inorganic pyrophosphate (PPi) forming two phosphate ions. This chain is Inorganic pyrophosphatase, found in Nostoc sp. (strain PCC 7120 / SAG 25.82 / UTEX 2576).